The following is a 393-amino-acid chain: Acetylornithine aminotransferase 1 (393 aa).

Arg-131 is a N(2)-acetyl-L-ornithine binding site. 215-218 (DEVQ) is a binding site for pyridoxal 5'-phosphate. At Lys-244 the chain carries N6-(pyridoxal phosphate)lysine. N(2)-acetyl-L-ornithine is bound at residue Thr-272. Thr-273 lines the pyridoxal 5'-phosphate pocket.

The protein belongs to the class-III pyridoxal-phosphate-dependent aminotransferase family. ArgD subfamily. In terms of assembly, homodimer. Pyridoxal 5'-phosphate serves as cofactor.

It localises to the cytoplasm. It carries out the reaction N(2)-acetyl-L-ornithine + 2-oxoglutarate = N-acetyl-L-glutamate 5-semialdehyde + L-glutamate. The protein operates within amino-acid biosynthesis; L-arginine biosynthesis; N(2)-acetyl-L-ornithine from L-glutamate: step 4/4. This Bordetella bronchiseptica (strain ATCC BAA-588 / NCTC 13252 / RB50) (Alcaligenes bronchisepticus) protein is Acetylornithine aminotransferase 1.